A 311-amino-acid chain; its full sequence is Probable manganese-dependent inorganic pyrophosphatase (311 aa).

Positions 9, 13, 15, 77, 99, and 151 each coordinate Mn(2+).

The protein belongs to the PPase class C family. Requires Mn(2+) as cofactor.

The protein resides in the cytoplasm. The catalysed reaction is diphosphate + H2O = 2 phosphate + H(+). The polypeptide is Probable manganese-dependent inorganic pyrophosphatase (Streptococcus agalactiae serotype Ia (strain ATCC 27591 / A909 / CDC SS700)).